The sequence spans 383 residues: Geranylgeranyl pyrophosphate synthase esdpD (383 aa).

Isopentenyl diphosphate contacts are provided by lysine 88, arginine 91, and histidine 120. Residues aspartate 150 and aspartate 154 each contribute to the Mg(2+) site. Residue arginine 159 participates in dimethylallyl diphosphate binding. Arginine 160 serves as a coordination point for isopentenyl diphosphate. Dimethylallyl diphosphate contacts are provided by lysine 237, threonine 238, and glutamine 271. Aspartate 274 lines the Mg(2+) pocket. Asparagine 278, lysine 288, and lysine 298 together coordinate dimethylallyl diphosphate.

This sequence belongs to the FPP/GGPP synthase family. The cofactor is Mg(2+).

The enzyme catalyses isopentenyl diphosphate + dimethylallyl diphosphate = (2E)-geranyl diphosphate + diphosphate. It catalyses the reaction isopentenyl diphosphate + (2E)-geranyl diphosphate = (2E,6E)-farnesyl diphosphate + diphosphate. It carries out the reaction isopentenyl diphosphate + (2E,6E)-farnesyl diphosphate = (2E,6E,10E)-geranylgeranyl diphosphate + diphosphate. The protein operates within secondary metabolite biosynthesis; terpenoid biosynthesis. Functionally, geranylgeranyl pyrophosphate synthase; part of the cluster that mediates the biosynthesis of shearones, diterpenoid pyrones (DPs) which are structurally diverse meroterpenoids consisting of a diterpene linked by a pyrone, and which may exhibit a range of bioactivities. Within the pathway, esdpD takes part to the biosynthesis of the molecular scaffold by providing geranylgeranyl pyrophosphate (GGPP) to the prenyltransferase esdpC for C-3 geranylgeranylation of the alpha-pyrone. The molecular scaffold is commonly biosynthesized by a series of enzymes including the non-reducing polyketide synthase (NR-PKS) esdpA that generates an alpha-pyrone; the prenyltransferase esdpC that attaches a geranylgeranyl pyrophosphate (GGPP) produced by the GGPP synthase (GGPPS) esdpD onto the pyrone unit; the FAD-dependent monooxygenase esdpE that converts an olefin on the diterpene unit into an epoxide; and the terpene cyclase esdpB that catalyzes the cyclization reactions to give the molecular backbone shearone A. In the modification steps, esdpF oxidizes the hydroxy group to a ketone at C-3 and esdpG then attaches hydroxy groups at both C-11 and C-12. After that, esdpI hydroxylates at C-20 and esdpH hydroxylates at C-6'. The ether bridge is generated by nucleophilic attack of the hydroxy group at C-20 to the carbonyl carbon at C-3. EsdpH can also functions prior to esdpI. The different combinations of these modification enzymes lead to the production of diverse shearone derivatives, shearone I being the end product of the pathway. The alpha-ketoglutarate-dependent dioxygenase esdpJ seems not to be involved in this pathway. This is Geranylgeranyl pyrophosphate synthase esdpD from Penicillium shearii (Eupenicillium shearii).